The chain runs to 435 residues: Cyclic 2,3-diphosphoglycerate synthetase (435 aa).

The protein belongs to the cyclic 2,3-diphosphoglycerate synthetase family.

The protein localises to the cytoplasm. The catalysed reaction is (2R)-2,3-bisphosphoglycerate + ATP + H(+) = cyclic (2R)-2,3-bisphosphoglycerate + ADP + phosphate. In terms of biological role, catalyzes the formation of cyclic 2,3-diphosphoglycerate (cDPG) by formation of an intramolecular phosphoanhydride bond at the expense of ATP. The protein is Cyclic 2,3-diphosphoglycerate synthetase of Pyrococcus horikoshii (strain ATCC 700860 / DSM 12428 / JCM 9974 / NBRC 100139 / OT-3).